The primary structure comprises 335 residues: Nucleoid-associated protein YejK (335 aa).

The protein belongs to the YejK family.

Its subcellular location is the cytoplasm. The protein localises to the nucleoid. The polypeptide is Nucleoid-associated protein YejK (Shigella sonnei (strain Ss046)).